A 154-amino-acid polypeptide reads, in one-letter code: Endoribonuclease YbeY (154 aa).

3 residues coordinate Zn(2+): H116, H120, and H126.

It belongs to the endoribonuclease YbeY family. Zn(2+) serves as cofactor.

It localises to the cytoplasm. Functionally, single strand-specific metallo-endoribonuclease involved in late-stage 70S ribosome quality control and in maturation of the 3' terminus of the 16S rRNA. This Chromohalobacter salexigens (strain ATCC BAA-138 / DSM 3043 / CIP 106854 / NCIMB 13768 / 1H11) protein is Endoribonuclease YbeY.